Reading from the N-terminus, the 520-residue chain is Putative transporter svop-1 (520 aa).

Over 1–85 (MGDKAILTEV…LGFGRFQLKL (85 aa)) the chain is Cytoplasmic. A helical membrane pass occupies residues 86–106 (SILTGMAWMADAMEMMLLSLI). The Extracellular segment spans residues 107–120 (SPALACEWGISSVQ). A helical transmembrane segment spans residues 121-141 (QALVTTCVFSGMMLSSTFWGK). At 142–157 (ICDRFGRRKGLTFSTL) the chain is on the cytoplasmic side. Residues 158–178 (VACIMGVISGMSPHFYVLLFF) form a helical membrane-spanning segment. Arginine 179 is a topological domain (extracellular). Residues 180–200 (GLTGFGIGGVPQSVTLYAEFL) traverse the membrane as a helical segment. The Cytoplasmic segment spans residues 201-208 (PTAQRAKC). A helical transmembrane segment spans residues 209-229 (VVLIESFWAIGAVFEALLAYF). Topologically, residues 230–237 (VMESFGWR) are extracellular. Residues 238-258 (ALMFLSSLPLGIFAVASFWLP) form a helical membrane-spanning segment. Topologically, residues 259–319 (ESARFDMASG…LLSPDLRKTT (61 aa)) are cytoplasmic. A helical transmembrane segment spans residues 320–340 (ILLWCIWAITAFSYYGMVLFT). The Extracellular segment spans residues 341-372 (TVLFQSHDECHGGLFSNGTQMEVCQPLTRSDY). Residues 373-393 (FDLLSTTLAEFPGLIITVLII) form a helical membrane-spanning segment. Residues 394–410 (EWFGRKKTMALEYAVFA) are Cytoplasmic-facing. A helical membrane pass occupies residues 411 to 431 (IFTFLLYFCLDRFTVTVLIFV). Over 432–434 (ARA) the chain is Extracellular. A helical membrane pass occupies residues 435-455 (FISGAFQCAYVYTPEVYPTTL). At 456 to 461 (RAVGLG) the chain is on the cytoplasmic side. Residues 462–487 (TCSAMARIGAIVTPFIAQVASEKSLS) traverse the membrane as a helical segment. The Extracellular segment spans residues 488 to 489 (LP). Residues 490 to 509 (IGIYGTAAILGLIASLSLPI) form a helical membrane-spanning segment. Residues 510-520 (ETKGRQMMDSH) lie on the Cytoplasmic side of the membrane.

Belongs to the major facilitator superfamily.

The protein localises to the membrane. The sequence is that of Putative transporter svop-1 from Caenorhabditis elegans.